Reading from the N-terminus, the 264-residue chain is Methionine aminopeptidase (264 aa).

H79 provides a ligand contact to substrate. Residues D97, D108, and H171 each contribute to the a divalent metal cation site. H178 provides a ligand contact to substrate. A divalent metal cation contacts are provided by E204 and E235.

It belongs to the peptidase M24A family. Methionine aminopeptidase type 1 subfamily. Monomer. Co(2+) serves as cofactor. It depends on Zn(2+) as a cofactor. Mn(2+) is required as a cofactor. Requires Fe(2+) as cofactor.

It carries out the reaction Release of N-terminal amino acids, preferentially methionine, from peptides and arylamides.. Functionally, removes the N-terminal methionine from nascent proteins. The N-terminal methionine is often cleaved when the second residue in the primary sequence is small and uncharged (Met-Ala-, Cys, Gly, Pro, Ser, Thr, or Val). Requires deformylation of the N(alpha)-formylated initiator methionine before it can be hydrolyzed. In Buchnera aphidicola subsp. Acyrthosiphon pisum (strain APS) (Acyrthosiphon pisum symbiotic bacterium), this protein is Methionine aminopeptidase.